Consider the following 184-residue polypeptide: UPF0301 protein Rsph17029_2659 (184 aa).

The protein belongs to the UPF0301 (AlgH) family.

The sequence is that of UPF0301 protein Rsph17029_2659 from Cereibacter sphaeroides (strain ATCC 17029 / ATH 2.4.9) (Rhodobacter sphaeroides).